The primary structure comprises 61 residues: Small ribosomal subunit protein uS14 (61 aa).

Zn(2+) contacts are provided by Cys24, Cys27, Cys40, and Cys43.

This sequence belongs to the universal ribosomal protein uS14 family. Zinc-binding uS14 subfamily. As to quaternary structure, part of the 30S ribosomal subunit. Contacts proteins S3 and S10. Zn(2+) serves as cofactor.

In terms of biological role, binds 16S rRNA, required for the assembly of 30S particles and may also be responsible for determining the conformation of the 16S rRNA at the A site. The sequence is that of Small ribosomal subunit protein uS14 from Geobacter metallireducens (strain ATCC 53774 / DSM 7210 / GS-15).